The following is a 448-amino-acid chain: Death-associated protein kinase 3 (448 aa).

Residues 13 to 275 form the Protein kinase domain; it reads YEMGEELGSG…IAQSLEHSWI (263 aa). ATP-binding positions include 19–27 and lysine 42; that span reads LGSGQFAIV. Residue aspartate 139 is the Proton acceptor of the active site. The interval 161-204 is activation segment; sequence DFGIAHRIEAGSEFKNIFGTPEFVAPEIVNYEPLGLEADMWSIG. A phosphothreonine mark is found at threonine 180 and threonine 225. Residue threonine 265 is modified to Phosphothreonine; by autocatalysis. Threonine 265 is subject to Phosphothreonine; by ROCK1. At serine 304 the chain carries Phosphoserine; by DAPK1. Serine 306 is subject to Phosphoserine; by autocatalysis and DAPK1. Phosphoserine; by DAPK1 is present on residues serine 307, serine 313, and serine 321. Residues 390–448 form an interaction with CDC5L region; that stretch reads AQEEARAALLGAGGLKRRLCRLENRYDALAAQVAAEVQFVRDLVRALEQERLQAECGVR. Residues 418–448 are required for interaction with ATF4 but not with PAWR; sequence LAAQVAAEVQFVRDLVRALEQERLQAECGVR. Positions 422-436 are leucine-zipper; sequence VAAEVQFVRDLVRAL.

The protein belongs to the protein kinase superfamily. CAMK Ser/Thr protein kinase family. DAP kinase subfamily. Homooligomer in its kinase-active form (homotrimers and homodimers are reported); monomeric in its kinase-inactive form. Homodimerization is required for activation segment autophosphorylation. Interacts with DAXX, ATF4, NLK, TCF7L2, UBE2D1, UBE2D2, UBE2D3 and CDC5L. Interacts with PAWR; also demonstrated in aorta smooth muscle cells indicative for the cytoskeletal targeting function of PAWR. Interacts with AR; enhanced by AATF. Interacts with LUZP1; the interaction is likely to occur throughout the cell cycle and reduces the LUZP1-mediated suppression of MYL9 phosphorylation. Requires Mg(2+) as cofactor. Post-translationally, ubiquitinated. Ubiquitination mediated by the UBE2D3 E3 ligase does not lead to proteasomal degradation, but influences promyelocytic leukemia protein nuclear bodies (PML-NBs) formation in the nucleus. The phosphorylation status is critical for kinase activity, oligomerization and intracellular localization. Phosphorylation at Thr-180, Thr-225 and Thr-265 is essential for activity. The phosphorylated form is localized in the cytoplasm and nuclear translocation or retention is maximal when it is not phosphorylated. Phosphorylation increases the trimeric form, and its dephosphorylation favors a kinase-inactive monomeric form. In terms of tissue distribution, ubiquitously expressed in all tissue types examined. High levels in brain, heart, lung and spleen, lower expression in kidney, liver, skeletal muscle and testis. Isoform 2 is expressed in the smooth muscle.

It localises to the nucleus. The protein localises to the PML body. Its subcellular location is the cytoplasm. The protein resides in the cytoskeleton. It is found in the microtubule organizing center. It localises to the chromosome. The protein localises to the centromere. Its subcellular location is the spindle. The protein resides in the midbody. The catalysed reaction is L-seryl-[protein] + ATP = O-phospho-L-seryl-[protein] + ADP + H(+). It catalyses the reaction L-threonyl-[protein] + ATP = O-phospho-L-threonyl-[protein] + ADP + H(+). With respect to regulation, a sequential activation is proposed: autophosphorylation at consensus sites is leading to dimerization of the catalytic domain and activation segment exchange (producing an active confirmation of both kinase modules in trans) followed by phosphorylation at Thr-180 in the activation segment and at other regulatory sites. Phosphorylation at Thr-180, Thr-225 and Thr-265 is essential for activity. Inhibited by pyridone 6 (K00225), a potent, ATP-competitive inhibitor. Phosphorylation at Thr-180, Thr-225 and Thr-265 is essential for activity. Serine/threonine kinase which is involved in the regulation of apoptosis, autophagy, transcription, translation and actin cytoskeleton reorganization. Regulates both type I (caspase-dependent) apoptotic and type II (caspase-independent) autophagic cell deaths signal, depending on the cellular setting. Involved in formation of promyelocytic leukemia protein nuclear body (PML-NB). Involved in apoptosis involving PAWR which mediates cytoplasmic relocation; in vitro phosphorylates PAWR. Regulates myosin phosphorylation in both smooth muscle and non-muscle cells. In smooth muscle, regulates myosin either directly by phosphorylating MYL12B and MYL9 or through inhibition of smooth muscle myosin phosphatase (SMPP1M) via phosphorylation of PPP1R12A; the inhibition of SMPP1M functions to enhance muscle responsiveness to Ca(2+) and promote a contractile state. Phosphorylates MYL12B in non-muscle cells leading to reorganization of actin cytoskeleton such as in regulation of cell polarity and cell migration. Positively regulates canonical Wnt/beta-catenin signaling through interaction with NLK and TCF7L2; disrupts the NLK-TCF7L2 complex thereby influencing the phosphorylation of TCF7L2 by NLK. Phosphorylates RPL13A on 'Ser-77' upon interferon-gamma activation which is causing RPL13A release from the ribosome, RPL13A association with the GAIT complex and its subsequent involvement in transcript-selective translation inhibition. Phosphorylates STAT3 and enhances its transcriptional activity. Enhances transcription from AR-responsive promoters in a hormone- and kinase-dependent manner. Phosphorylates histone H3 on 'Thr-11' at centromeres during mitosis. The chain is Death-associated protein kinase 3 (Dapk3) from Rattus norvegicus (Rat).